The primary structure comprises 560 residues: Thermosome subunit 1 (560 aa).

A disordered region spans residues 525–550 (LSGGQTGSDDDDGGAPGGMGGGMGGM). Gly residues predominate over residues 538 to 550 (GAPGGMGGGMGGM).

It belongs to the TCP-1 chaperonin family. The thermosome or CCT complex is a oligomeric complex of two octameric double-ring structures; the complex is probably a heterooligomer of CCT1, CCT2 and CCT3 with yet unknown stoichiometry.

Molecular chaperone that assists in the folding or refolding of nascent or denatured proteins along with ATP hydrolysis. ATPase activity is highest in thermosome assemblies containing CCT1:CCT2, followed by assemblies containing CCT1:CCT2:CCT3. Required for thermosome ATPase activity. Not required for growth. The chain is Thermosome subunit 1 (cct1) from Haloferax volcanii (strain ATCC 29605 / DSM 3757 / JCM 8879 / NBRC 14742 / NCIMB 2012 / VKM B-1768 / DS2) (Halobacterium volcanii).